The primary structure comprises 404 residues: Phosphopentomutase (404 aa).

Mn(2+) is bound by residues Asp10, Asp303, His308, Asp344, His345, and His356.

The protein belongs to the phosphopentomutase family. Requires Mn(2+) as cofactor.

It localises to the cytoplasm. It catalyses the reaction 2-deoxy-alpha-D-ribose 1-phosphate = 2-deoxy-D-ribose 5-phosphate. The enzyme catalyses alpha-D-ribose 1-phosphate = D-ribose 5-phosphate. It participates in carbohydrate degradation; 2-deoxy-D-ribose 1-phosphate degradation; D-glyceraldehyde 3-phosphate and acetaldehyde from 2-deoxy-alpha-D-ribose 1-phosphate: step 1/2. Its function is as follows. Isomerase that catalyzes the conversion of deoxy-ribose 1-phosphate (dRib-1-P) and ribose 1-phosphate (Rib-1-P) to deoxy-ribose 5-phosphate (dRib-5-P) and ribose 5-phosphate (Rib-5-P), respectively. The polypeptide is Phosphopentomutase (Shewanella sp. (strain W3-18-1)).